Reading from the N-terminus, the 402-residue chain is Meiosis-specific cyclin rem1 (402 aa).

It belongs to the cyclin family. Cyclin AB subfamily.

Required for pre-meiotic DNA synthesis and S phase progression. Regulates levels of meiotic intragenic recombination. The chain is Meiosis-specific cyclin rem1 (rem1) from Schizosaccharomyces pombe (strain 972 / ATCC 24843) (Fission yeast).